Consider the following 70-residue polypeptide: uncharacterized protein (70 aa).

This is an uncharacterized protein from Saccharomyces cerevisiae (strain ATCC 204508 / S288c) (Baker's yeast).